A 500-amino-acid chain; its full sequence is ADP,ATP carrier protein 5 (500 aa).

A run of 11 helical transmembrane segments spans residues 26 to 46 (LGKF…QNIL), 62 to 82 (IAGF…VIIY), 94 to 114 (IFYY…FVIY), 149 to 169 (YIVY…LLFW), 184 to 204 (FYTL…FLMM), 224 to 244 (ITLV…CCLL), 287 to 307 (LWLL…VEAV), 328 to 348 (LYIL…NNVM), 357 to 377 (AVIS…LIVF), 381 to 401 (ILSL…VSIG), and 469 to 489 (SISP…IYAV).

It belongs to the ADP/ATP translocase tlc family.

Its subcellular location is the cell membrane. Functionally, provides the rickettsial cell with host ATP in exchange for rickettsial ADP. This is an obligate exchange system. This energy acquiring activity is an important component of rickettsial parasitism. The polypeptide is ADP,ATP carrier protein 5 (tlcE) (Rickettsia prowazekii (strain Madrid E)).